Consider the following 180-residue polypeptide: Ribonuclease M5 (180 aa).

The Toprim domain maps to 5 to 90 (KQIIIVEGKT…NAFIKKDDIS (86 aa)). Mg(2+) is bound by residues E11, D59, and D61.

The protein belongs to the ribonuclease M5 family. Mg(2+) is required as a cofactor.

The protein resides in the cytoplasm. It carries out the reaction Endonucleolytic cleavage of RNA, removing 21 and 42 nucleotides, respectively, from the 5'- and 3'-termini of a 5S-rRNA precursor.. Its function is as follows. Required for correct processing of both the 5' and 3' ends of 5S rRNA precursor. Cleaves both sides of a double-stranded region yielding mature 5S rRNA in one step. The polypeptide is Ribonuclease M5 (Mycoplasma capricolum subsp. capricolum (strain California kid / ATCC 27343 / NCTC 10154)).